The sequence spans 301 residues: MRIAVLSRNPNLYSTRRLKEAGEARGHTVDIIDTLHCYMDITMSRPAVRYHGEELPYYDAVIPRIGASITFYGTAVVRQFEMMGTFCVNESVAISRSRDKLRSLQLLSRKGVGLPRTGFANRPDKIKDLIKNVGGAPLVIKLLEGTQGIGVVLADTNKTAESILEAFMGLNANILVQEYIKEAGGADIRCFVVGNKVVAAMKRQGAEGEFRSNLHRGGSATLVRLSKEERATAVNAAKVMGLNVCGVDILQSNNGPVVMEVNSSPGLEGIENATNKDVAALVMEFIEANAKPNNTKTRGKG.

Residues 104-287 (LQLLSRKGVG…VAALVMEFIE (184 aa)) enclose the ATP-grasp domain. Residues Lys-141, 178–179 (EY), Asp-187, and 211–213 (RSN) contribute to the ATP site. Mg(2+)-binding residues include Asp-248, Glu-260, and Asn-262. Mn(2+)-binding residues include Asp-248, Glu-260, and Asn-262.

This sequence belongs to the RimK family. The cofactor is Mg(2+). It depends on Mn(2+) as a cofactor.

In Saccharophagus degradans (strain 2-40 / ATCC 43961 / DSM 17024), this protein is Probable alpha-L-glutamate ligase.